The sequence spans 193 residues: Adenine phosphoribosyltransferase (193 aa).

It belongs to the purine/pyrimidine phosphoribosyltransferase family. Homodimer.

Its subcellular location is the cytoplasm. It catalyses the reaction AMP + diphosphate = 5-phospho-alpha-D-ribose 1-diphosphate + adenine. It participates in purine metabolism; AMP biosynthesis via salvage pathway; AMP from adenine: step 1/1. Catalyzes a salvage reaction resulting in the formation of AMP, that is energically less costly than de novo synthesis. In Bifidobacterium longum subsp. infantis (strain ATCC 15697 / DSM 20088 / JCM 1222 / NCTC 11817 / S12), this protein is Adenine phosphoribosyltransferase.